Consider the following 134-residue polypeptide: Arsenate reductase (134 aa).

Active-site nucleophile residues include Cys11, Cys83, and Cys90. Disulfide bonds link Cys11-Cys83 and Cys83-Cys90.

It belongs to the low molecular weight phosphotyrosine protein phosphatase family. Thioredoxin-coupled ArsC subfamily.

The protein localises to the cytoplasm. It carries out the reaction arsenate + [thioredoxin]-dithiol + H(+) = arsenite + [thioredoxin]-disulfide + H2O. In terms of biological role, catalyzes the reduction of arsenate [As(V)] to arsenite [As(III)]. This Bacillus cereus (strain AH187) protein is Arsenate reductase.